Consider the following 310-residue polypeptide: 5-oxoprolinase subunit C (310 aa).

The protein belongs to the PxpC family. As to quaternary structure, forms a complex composed of PxpA, PxpB and PxpC.

The enzyme catalyses 5-oxo-L-proline + ATP + 2 H2O = L-glutamate + ADP + phosphate + H(+). In terms of biological role, catalyzes the cleavage of 5-oxoproline to form L-glutamate coupled to the hydrolysis of ATP to ADP and inorganic phosphate. The sequence is that of 5-oxoprolinase subunit C from Escherichia coli (strain K12).